The sequence spans 615 residues: MGGVCSCVFKDDDKKKKLRSNDDDKSRGFSGKLKSMRRSKTSDSYYSDNYGGSRRKSSKPDEVVFNFSGELGPMPPLRNDSTKFMQRNSFMGRAGVMGLEKAVEVLDTLGSSMTRMNPSNAYLSGVTSSRGGKVTILAFEVANTIAKGAALLQSLSEENLKFMKKDMLHSEEVKKLVSTDTTELQILAASDKREELDLFSGEVIRFGNMCKDLQWHNLDRYFMKLDTENSQHKLLKDDAEARMQELVTLARITSELYHELQALDRFEQDYRRKLAEVESLNLPRRGEGIVILQNELKQQKKLVKSLQKKSLWSQNLAEIIEKLVDVVSYIRQTIVEVFGNNGLRDNEGEQGRERLGEAGLSLHYANLIQQIDNIASRPSSLPSNVRDTLYNALPATVKTALRPRLQTLDQEEELSVPEIKAEMEKSLQWLVPFAENTTKAHQGFGWVGEWANSRIEFGKGKGKGENNGNPTRLQTLHHADKPIVDSYVLELVVWLHRLMKSSKKRAHGVKLQETNHVSPPNNRTISNTQLSLSPDFTYKNQLSLEDRLLLDRVQSIRFGPNLSKSQELVGLKKNKKGFKIWALSRSTGNSPKVDLSDKNSSSDLDVLDGLDFAFQ.

A lipid anchor (N-myristoyl glycine) is attached at Gly-2. The span at 16–27 (KKLRSNDDDKSR) shows a compositional bias: basic and acidic residues. 2 disordered regions span residues 16–59 (KKLR…KSSK) and 506–529 (AHGVKLQETNHVSPPNNRTISNTQ). Over residues 42–52 (SDSYYSDNYGG) the composition is skewed to low complexity. Over residues 512–529 (QETNHVSPPNNRTISNTQ) the composition is skewed to polar residues.

The protein localises to the nucleus. Promotes seedling growth probably via the regulation of phytosulfokine (PSK) signaling; PSK are peptide phytohormones acting as growth factors. Involved in PSK-induced root growth. Together with PSI1 and PSI3, required during vegetative growth and reproduction. The protein is Protein PSK SIMULATOR 2 of Arabidopsis thaliana (Mouse-ear cress).